The primary structure comprises 476 residues: Ovarian-specific serine/threonine-protein kinase Lok (476 aa).

The FHA domain occupies 69 to 129 (FTAGRGEAND…NGTFVNNEKI (61 aa)). Residues 174 to 441 (YYVNRKLGSG…IDDVLQSSWL (268 aa)) form the Protein kinase domain. ATP is bound by residues 180–188 (LGSGAYGLV) and K203. The active-site Proton acceptor is D303.

The protein belongs to the protein kinase superfamily. CAMK Ser/Thr protein kinase family. CDS1 subfamily. In terms of tissue distribution, in stage 3 embryos, both isoforms are expressed in both somatic and pole cell nuclei. Expression in pole cell nuclei is sustained until stage 9 and weakly expressed after pole cell invagination into the abdominal cavity.

The protein localises to the nucleus speckle. The enzyme catalyses L-seryl-[protein] + ATP = O-phospho-L-seryl-[protein] + ADP + H(+). It catalyses the reaction L-threonyl-[protein] + ATP = O-phospho-L-threonyl-[protein] + ADP + H(+). May have a role in germline establishment. The chain is Ovarian-specific serine/threonine-protein kinase Lok (lok) from Drosophila melanogaster (Fruit fly).